Here is a 254-residue protein sequence, read N- to C-terminus: 3-deoxy-manno-octulosonate cytidylyltransferase (254 aa).

Belongs to the KdsB family.

The protein resides in the cytoplasm. It catalyses the reaction 3-deoxy-alpha-D-manno-oct-2-ulosonate + CTP = CMP-3-deoxy-beta-D-manno-octulosonate + diphosphate. It participates in nucleotide-sugar biosynthesis; CMP-3-deoxy-D-manno-octulosonate biosynthesis; CMP-3-deoxy-D-manno-octulosonate from 3-deoxy-D-manno-octulosonate and CTP: step 1/1. The protein operates within bacterial outer membrane biogenesis; lipopolysaccharide biosynthesis. In terms of biological role, activates KDO (a required 8-carbon sugar) for incorporation into bacterial lipopolysaccharide in Gram-negative bacteria. This chain is 3-deoxy-manno-octulosonate cytidylyltransferase, found in Nitrobacter winogradskyi (strain ATCC 25391 / DSM 10237 / CIP 104748 / NCIMB 11846 / Nb-255).